Here is a 268-residue protein sequence, read N- to C-terminus: Regulatory protein zeste (268 aa).

Residues 1 to 72 (TAEEKEVLYT…WLNSRLRKQY (72 aa)) mediate DNA binding. Positions 94-108 (VSVASAVPQQQQQQH) are enriched in low complexity. A disordered region spans residues 94 to 133 (VSVASAVPQQQQQQHHQQHDNVKEEPEYQISPDASEHNPQ). The span at 110-119 (QQHDNVKEEP) shows a compositional bias: basic and acidic residues.

In terms of assembly, self-associates forming complexes of several hundred monomers.

Its subcellular location is the nucleus. Involved in transvection phenomena (= synapsis-dependent gene expression), where the synaptic pairing of chromosomes carrying genes with which zeste interacts influences the expression of these genes. Zeste binds to DNA and stimulates transcription from a nearby promoter. The polypeptide is Regulatory protein zeste (z) (Drosophila sechellia (Fruit fly)).